A 322-amino-acid chain; its full sequence is MSDSLIDLLLEIGKALIVLVGIVGAGAFMSFIERRLLALWQDRYGPNRVGPFGLLQLAADMIKMFFKEDWIPPFADRRIFVLAPIIAFTAFILAFAVVPITPTWGVADLNVGLLYILAIAGLAVYAVLFAGWSSNNKYSLLGSLRASAQTLSYEVFLGLSLMGIVIQTGSFNLRDIVEAQAGLWNVIPQILGFITFLFAGVAVTHRHPFDQPEAEQELADGYHIEYAGMKWGLFFVGEYIGIVLISSLIVTLFFGGWHGPWLPPFIWFALKTACFMVFFILLRASLPRPRFDQVMSFGWKVCLPLTLLNMLVTGAVVLMNAQ.

8 helical membrane-spanning segments follow: residues 12 to 32 (IGKA…MSFI), 79 to 99 (IFVL…AVVP), 111 to 131 (VGLL…LFAG), 151 to 171 (LSYE…TGSF), 183 to 203 (LWNV…GVAV), 234 to 254 (FFVG…TLFF), 262 to 282 (LPPF…FILL), and 301 to 321 (VCLP…LMNA).

It belongs to the complex I subunit 1 family. As to quaternary structure, NDH-1 is composed of 14 different subunits. Subunits NuoA, H, J, K, L, M, N constitute the membrane sector of the complex.

It is found in the cell inner membrane. It carries out the reaction a quinone + NADH + 5 H(+)(in) = a quinol + NAD(+) + 4 H(+)(out). In terms of biological role, NDH-1 shuttles electrons from NADH, via FMN and iron-sulfur (Fe-S) centers, to quinones in the respiratory chain. The immediate electron acceptor for the enzyme in this species is believed to be ubiquinone. Couples the redox reaction to proton translocation (for every two electrons transferred, four hydrogen ions are translocated across the cytoplasmic membrane), and thus conserves the redox energy in a proton gradient. This subunit may bind ubiquinone. This Aeromonas hydrophila subsp. hydrophila (strain ATCC 7966 / DSM 30187 / BCRC 13018 / CCUG 14551 / JCM 1027 / KCTC 2358 / NCIMB 9240 / NCTC 8049) protein is NADH-quinone oxidoreductase subunit H.